The primary structure comprises 451 residues: Exodeoxyribonuclease 7 large subunit (451 aa).

This sequence belongs to the XseA family. As to quaternary structure, heterooligomer composed of large and small subunits.

Its subcellular location is the cytoplasm. It catalyses the reaction Exonucleolytic cleavage in either 5'- to 3'- or 3'- to 5'-direction to yield nucleoside 5'-phosphates.. Bidirectionally degrades single-stranded DNA into large acid-insoluble oligonucleotides, which are then degraded further into small acid-soluble oligonucleotides. The chain is Exodeoxyribonuclease 7 large subunit from Bacillus cytotoxicus (strain DSM 22905 / CIP 110041 / 391-98 / NVH 391-98).